The sequence spans 302 residues: Tegument protein VP22 (302 aa).

Positions M1–C10 are enriched in basic and acidic residues. Disordered regions lie at residues M1–S42 and S125–S167. The tract at residues R154–A244 is interaction with gE. The segment covering S157–S167 has biased composition (polar residues). The short motif at L212 to T224 is the Nuclear export signal element. Positions G243–K302 are disordered.

This sequence belongs to the alphaherpesvirinae VP22 tegument protein family. Interacts with gE (via C-terminus); this interaction is necessary for the recruitment of VP22/ORF9 to the Golgi and its packaging into virions. Interacts with gM (via C-terminus). Interacts with VP16/ORF10; this interaction allows the formation of a tripartite complex composed of VP16/ORF10, VP22/ORF9 and VHS/ORF17. Interacts with the capsid-binding protein ORF44. Interacts with host CGAS. Highly phosphorylated in the host cell. Packaging is selective for underphosphorylated forms.

It is found in the virion tegument. Its subcellular location is the host cytoplasm. The protein resides in the host nucleus. The protein localises to the host Golgi apparatus. In terms of biological role, tegument protein that plays different roles during the time course of infection. Participates in both the accumulation of viral mRNAs and viral protein translation at late time of infection. Modulates the RNase activity of the virion host shutoff protein ORF17 probably to ensure necessary levels of key cellular mRNAs and proteins. Plays a role in microtubule reorganization that occurs after viral infection by stabilizing microtubule network. Plays a role in the inhibition of host innate immune system by targeting the CGAS enzymatic activity which is the principal cytosolic DNA sensor that detects invading viral DNA. Acts by mediating disruption of liquid-like droplets in which CGAS is activated, thereby preventing CGAS activity. The protein is Tegument protein VP22 of Varicella-zoster virus (strain Oka vaccine) (HHV-3).